The sequence spans 272 residues: R-spondin-3 (272 aa).

A signal peptide spans 1 to 21 (MHLRLISWLFIILNFMEYIGS). FU repeat units follow at residues 35 to 86 (PNVS…GYYG) and 92 to 135 (INKC…GLEA). N-linked (GlcNAc...) asparagine glycosylation occurs at Asn-36. 11 cysteine pairs are disulfide-bonded: Cys-41-Cys-48, Cys-45-Cys-54, Cys-57-Cys-76, Cys-80-Cys-95, Cys-98-Cys-105, Cys-102-Cys-111, Cys-114-Cys-125, Cys-129-Cys-142, Cys-148-Cys-190, Cys-159-Cys-166, and Cys-199-Cys-206. Residues 147–207 (HCEVSEWNPW…KCTVQRKKCQ (61 aa)) form the TSP type-1 domain. Positions 201-272 (VQRKKCQKGE…QKSVSVSTVH (72 aa)) are disordered. Residues 213–223 (KKGRERKRKKP) are compositionally biased toward basic residues. Basic and acidic residues predominate over residues 224 to 252 (NKGESKEAIPDSKSLESSKEIPEQRENKQ).

The protein belongs to the R-spondin family. Interacts with the extracellular domain of FZD8 and LRP6. It however does not form a ternary complex with FZD8 and LRP6. Interacts with WNT1. Binds heparin. Interacts with LGR4, LGR5 and LGR6. Ubiquitously expressed. Expressed at higher level in placenta, small intestine, fetal thymus and lymph node. Highly expressed in endothelial cells.

The protein resides in the secreted. Its function is as follows. Activator of the canonical Wnt signaling pathway by acting as a ligand for LGR4-6 receptors, which acts as a key regulator of angiogenesis. Upon binding to LGR4-6 (LGR4, LGR5 or LGR6), LGR4-6 associate with phosphorylated LRP6 and frizzled receptors that are activated by extracellular Wnt receptors, triggering the canonical Wnt signaling pathway to increase expression of target genes. Also regulates the canonical Wnt/beta-catenin-dependent pathway and non-canonical Wnt signaling by acting as an inhibitor of ZNRF3, an important regulator of the Wnt signaling pathway. Acts as a ligand for frizzled FZD8 and LRP6. May negatively regulate the TGF-beta pathway. Acts as a key regulator of angiogenesis by controlling vascular stability and pruning: acts by activating the non-canonical Wnt signaling pathway in endothelial cells. Can also amplify Wnt signaling pathway independently of LGR4-6 receptors, possibly by acting as a direct antagonistic ligand to RNF43 and ZNRF3. The sequence is that of R-spondin-3 (RSPO3) from Homo sapiens (Human).